We begin with the raw amino-acid sequence, 597 residues long: ATP-dependent lipid A-core flippase (597 aa).

6 helical membrane-spanning segments follow: residues 26–46 (WIFA…TGLA), 65–85 (IQII…ANFI), 144–164 (ILTI…MAYL), 166–186 (GLLT…IWWV), 250–270 (AISQ…VIHL), and 276–296 (MLAQ…MLLL). Positions 29–311 (AASIITMAIY…LTKINGTLQR (283 aa)) constitute an ABC transmembrane type-1 domain. Positions 343-579 (IRFEHLSFCY…ESHYAGLYRL (237 aa)) constitute an ABC transporter domain. Residue 377 to 384 (GHSGSGKS) participates in ATP binding.

It belongs to the ABC transporter superfamily. Lipid exporter (TC 3.A.1.106) family. As to quaternary structure, homodimer.

It is found in the cell inner membrane. The enzyme catalyses ATP + H2O + lipid A-core oligosaccharideSide 1 = ADP + phosphate + lipid A-core oligosaccharideSide 2.. Its function is as follows. Involved in lipopolysaccharide (LPS) biosynthesis. Translocates lipid A-core from the inner to the outer leaflet of the inner membrane. Transmembrane domains (TMD) form a pore in the inner membrane and the ATP-binding domain (NBD) is responsible for energy generation. The polypeptide is ATP-dependent lipid A-core flippase (Nitrosococcus oceani (strain ATCC 19707 / BCRC 17464 / JCM 30415 / NCIMB 11848 / C-107)).